Here is a 62-residue protein sequence, read N- to C-terminus: MPRKAKVVKDLKHFPKYATRQKNRCPICGRPRGFLRRFNMCRLCFREMALSGEITGVRKSSW.

Zn(2+)-binding residues include cysteine 25, cysteine 28, cysteine 41, and cysteine 44.

The protein belongs to the universal ribosomal protein uS14 family. Zinc-binding uS14 subfamily. Part of the 30S ribosomal subunit. Contacts proteins S3 and S10. Requires Zn(2+) as cofactor.

Binds 16S rRNA, required for the assembly of 30S particles and may also be responsible for determining the conformation of the 16S rRNA at the A site. The sequence is that of Small ribosomal subunit protein uS14 from Hydrogenobaculum sp. (strain Y04AAS1).